Reading from the N-terminus, the 337-residue chain is uncharacterized protein (337 aa).

The next 2 helical transmembrane spans lie at 4–24 (FIFFFKNYCYISGSMLLFSLI) and 26–46 (LLLWIISLYCVGLVFWILFVL).

It belongs to the plectrovirus ORF2 family.

The protein resides in the host membrane. This is an uncharacterized protein from Spiroplasma virus SpV1-R8A2 B (SpV1).